A 355-amino-acid polypeptide reads, in one-letter code: Putative arylamide transporter (355 aa).

A run of 6 helical transmembrane segments spans residues 22–42, 44–64, 71–91, 92–112, 119–139, and 150–170; these read TVLWPITQTSVVAGLAWYLTH, VFNHPQAFFAPISAVVCMSAT, RAQQMIVGVALGIVLGAGVHA, LLGSGPIAMGVVVFIALSVAV, VAQGLMFINQAAVSAVLVLVF, and LFDALVGGGLAIVFSILLFPP.

The protein resides in the cell membrane. Its function is as follows. May be involved in the import of arylamide compounds. The chain is Putative arylamide transporter from Mycobacterium bovis (strain ATCC BAA-935 / AF2122/97).